A 375-amino-acid polypeptide reads, in one-letter code: Pulmonary surfactant-associated protein D (375 aa).

The signal sequence occupies residues 1-21 (MLLFLLSALVLLTQSLGYLEA). S-nitrosocysteine is present on residues Cys-35 and Cys-40. A disordered region spans residues 43-221 (VESGLPGRDG…DKGAKGESGL (179 aa)). Residues 46–222 (GLPGRDGRDG…KGAKGESGLP (177 aa)) enclose the Collagen-like domain. A compositionally biased stretch (basic and acidic residues) spans 50-65 (RDGRDGREGPRGEKGD). Residue Pro-78 is modified to 4-hydroxyproline. The residue at position 87 (Lys-87) is a 5-hydroxylysine. A glycan (N-linked (GlcNAc...) asparagine) is linked at Asn-90. Position 96 is a 4-hydroxyproline (Pro-96). 5-hydroxylysine is present on Lys-99. Residues 105-114 (SGPPGPPGVP) are compositionally biased toward pro residues. 2 stretches are compositionally biased toward low complexity: residues 116 to 132 (PAGR…IGPQ) and 138 to 150 (KGEA…VGAP). Residues Pro-171 and Pro-177 each carry the 4-hydroxyproline modification. The span at 173–189 (ERGAPGNAGAAGSAGVM) shows a compositional bias: low complexity. Basic and acidic residues predominate over residues 204-216 (KGDKGVPGDKGAK). A coiled-coil region spans residues 223–251 (DVASLRQQVEALQKQVQHLQAAFSQYKKV). The C-type lectin domain occupies 260–374 (VGEKIFKTAG…CGEKRLVVCE (115 aa)). Cystine bridges form between Cys-281–Cys-373 and Cys-351–Cys-365.

This sequence belongs to the SFTPD family. Oligomeric complex of 4 set of homotrimers. Post-translationally, hydroxylation on proline residues within the sequence motif, GXPG, is most likely to be 4-hydroxy as this fits the requirement for 4-hydroxylation in vertebrates. S-nitrosylation at Cys-35 and Cys-40 alters the quaternary structure which results in a pro-inflammatory chemoattractive signaling activity with macrophages.

Its subcellular location is the secreted. The protein localises to the extracellular space. The protein resides in the extracellular matrix. It is found in the surface film. Its function is as follows. Contributes to the lung's defense against inhaled microorganisms, organic antigens and toxins. Interacts with compounds such as bacterial lipopolysaccharides, oligosaccharides and fatty acids and modulates leukocyte action in immune response. May participate in the extracellular reorganization or turnover of pulmonary surfactant. Binds strongly maltose residues and to a lesser extent other alpha-glucosyl moieties. The chain is Pulmonary surfactant-associated protein D (SFTPD) from Macaca mulatta (Rhesus macaque).